Reading from the N-terminus, the 297-residue chain is Syntaxin-4 (297 aa).

Basic and acidic residues predominate over residues 1-12; it reads MRDRTHELRQGD. The disordered stretch occupies residues 1–21; that stretch reads MRDRTHELRQGDDSSDDEDKE. The Cytoplasmic segment spans residues 1-275; that stretch reads MRDRTHELRQ…QKKARKKKVF (275 aa). Phosphoserine occurs at positions 14 and 15. Thr-31 bears the Phosphothreonine mark. 4 positions are modified to phosphoserine: Ser-36, Ser-117, Ser-208, and Ser-248. A coiled-coil region spans residues 43 to 163; sequence QKVRTIRQTI…ERIRRQLKIT (121 aa). The t-SNARE coiled-coil homology domain maps to 200-262; it reads LNEISARHSE…ERGQEHVKVA (63 aa). The chain crosses the membrane as a helical; Anchor for type IV membrane protein span at residues 276 to 296; sequence IAICLSITVLILVVIIVISTL. Position 297 (Val-297) is a topological domain, extracellular.

This sequence belongs to the syntaxin family. In terms of assembly, component of the SNARE complex composed of STX4, SNAP23 and VAMP7 that interacts with SYT7 during lysosomal exocytosis. Found in a complex with VAMP8 and SNAP23. Detected in a complex with SNAP23 and STXBP4. Interacts with VAMP2. Interacts with SNAP23 and SNAPIN. Interacts with LLGL1. Interacts (via C-terminus) with CENPF. Interacts with DOC2B. Interacts with STXBP6. Interacts with STXBP3; excludes interaction with DOC2B and SNAP25. Interacts with STXBP4; excludes interaction with VAMP2. Interacts with STXBP5L.

It localises to the cell membrane. The protein resides in the cell projection. It is found in the neuron projection. Its subcellular location is the stereocilium. Its function is as follows. Plasma membrane t-SNARE that mediates docking of transport vesicles. Necessary for the translocation of SLC2A4 from intracellular vesicles to the plasma membrane. In neurons, recruited at neurite tips to membrane domains rich in the phospholipid 1-oleoyl-2-palmitoyl-PC (OPPC) which promotes neurite tip surface expression of the dopamine transporter SLC6A3/DAT by facilitating fusion of SLC6A3-containing transport vesicles with the plasma membrane. Together with STXB3 and VAMP2, may also play a role in docking/fusion of intracellular GLUT4-containing vesicles with the cell surface in adipocytes and in docking of synaptic vesicles at presynaptic active zones. Required for normal hearing. The polypeptide is Syntaxin-4 (STX4) (Bos taurus (Bovine)).